Reading from the N-terminus, the 328-residue chain is Tetraacyldisaccharide 4'-kinase (328 aa).

58-65 (TMGGAGKT) serves as a coordination point for ATP.

The protein belongs to the LpxK family.

The enzyme catalyses a lipid A disaccharide + ATP = a lipid IVA + ADP + H(+). It participates in glycolipid biosynthesis; lipid IV(A) biosynthesis; lipid IV(A) from (3R)-3-hydroxytetradecanoyl-[acyl-carrier-protein] and UDP-N-acetyl-alpha-D-glucosamine: step 6/6. Transfers the gamma-phosphate of ATP to the 4'-position of a tetraacyldisaccharide 1-phosphate intermediate (termed DS-1-P) to form tetraacyldisaccharide 1,4'-bis-phosphate (lipid IVA). This chain is Tetraacyldisaccharide 4'-kinase, found in Phenylobacterium zucineum (strain HLK1).